The primary structure comprises 114 residues: FK506-binding protein 1 (114 aa).

In terms of domain architecture, PPIase FKBP-type spans 26–114 (GDLVTIHYTG…VFDVELLKIN (89 aa)).

It belongs to the FKBP-type PPIase family. FKBP1 subfamily.

The protein resides in the cytoplasm. The enzyme catalyses [protein]-peptidylproline (omega=180) = [protein]-peptidylproline (omega=0). Inhibited by both FK506 and rapamycin. PPIases accelerate the folding of proteins. It catalyzes the cis-trans isomerization of proline imidic peptide bonds in oligopeptides. This is FK506-binding protein 1 (FPR1) from Kluyveromyces lactis (strain ATCC 8585 / CBS 2359 / DSM 70799 / NBRC 1267 / NRRL Y-1140 / WM37) (Yeast).